The following is a 2512-amino-acid chain: Probable polyketide synthase 5 (2512 aa).

The Ketosynthase family 3 (KS3) domain occupies 17–447 (MKGVAIVGIG…GSNCCLLISE (431 aa)). Residues Cys-187, His-329, and His-368 each act as for beta-ketoacyl synthase activity in the active site. Positions 638-671 (GVNPSFILGHSLGEIPTSYCSGMIDLDTFCYTVY) are acyl/malonyl transferase. Residue Ser-648 is the For acyl/malonyl transferase activity of the active site. An N-terminal hotdog fold region spans residues 928-1050 (IDHLGLSNSY…ANFQLLDHTI (123 aa)). The PKS/mFAS DH domain occupies 928–1210 (IDHLGLSNSY…SKSLIPIKEL (283 aa)). Catalysis depends on His-962, which acts as the Proton acceptor; for dehydratase activity. The tract at residues 1067–1210 (TLARLTKNEI…SKSLIPIKEL (144 aa)) is C-terminal hotdog fold. Catalysis depends on Asp-1125, which acts as the Proton donor; for dehydratase activity. One can recognise a Carrier domain in the interval 2430-2507 (AGSKNVDELF…VSIKIILNFL (78 aa)). Ser-2467 carries the O-(pantetheine 4'-phosphoryl)serine modification.

Pantetheine 4'-phosphate is required as a cofactor.

Its function is as follows. Probable polyketide synthase. This chain is Probable polyketide synthase 5 (pks5), found in Dictyostelium discoideum (Social amoeba).